A 391-amino-acid chain; its full sequence is Rhizopuspepsin-3 (391 aa).

Positions 1 to 21 (MKFTLISSCVTLALMTLSIEA) are cleaved as a signal peptide. A propeptide spans 22 to 68 (APSGKKVNIPLTKNKDYKPNAKNAIQKAIAKYHRHRSVSSSNSTSTD) (activation peptide). The Peptidase A1 domain maps to 84 to 388 (YYGEVTVGTP…NPEVPHVQIA (305 aa)). Asp-102 is an active-site residue. Cys-115 and Cys-118 form a disulfide bridge. Residue Asp-285 is part of the active site. A disulfide bond links Cys-319 and Cys-352.

Belongs to the peptidase A1 family.

The enzyme catalyses Hydrolysis of proteins with broad specificity similar to that of pepsin A, preferring hydrophobic residues at P1 and P1'. Clots milk and activates trypsinogen. Does not cleave 4-Gln-|-His-5, but does cleave 10-His-|-Leu-11 and 12-Val-|-Glu-13 in B chain of insulin.. This Rhizopus niveus protein is Rhizopuspepsin-3.